Here is a 65-residue protein sequence, read N- to C-terminus: Large ribosomal subunit protein bL35 (65 aa).

Positions 1 to 22 (MPKLKTKSGAAKRFKKTGKGGF) are disordered.

Belongs to the bacterial ribosomal protein bL35 family.

This chain is Large ribosomal subunit protein bL35, found in Francisella philomiragia subsp. philomiragia (strain ATCC 25017 / CCUG 19701 / FSC 153 / O#319-036).